The following is a 224-amino-acid chain: dTTP/UTP pyrophosphatase (224 aa).

D77 serves as the catalytic Proton acceptor.

It belongs to the Maf family. YhdE subfamily. Requires a divalent metal cation as cofactor.

Its subcellular location is the cytoplasm. It carries out the reaction dTTP + H2O = dTMP + diphosphate + H(+). The enzyme catalyses UTP + H2O = UMP + diphosphate + H(+). Nucleoside triphosphate pyrophosphatase that hydrolyzes dTTP and UTP. May have a dual role in cell division arrest and in preventing the incorporation of modified nucleotides into cellular nucleic acids. This is dTTP/UTP pyrophosphatase from Dehalococcoides mccartyi (strain ATCC BAA-2100 / JCM 16839 / KCTC 5957 / BAV1).